The sequence spans 349 residues: Hydroxymethylglutaryl-CoA synthase (349 aa).

Residues Asp29 and Ala30 each coordinate (3S)-3-hydroxy-3-methylglutaryl-CoA. The active-site Proton donor/acceptor is Glu81. The (3S)-3-hydroxy-3-methylglutaryl-CoA site is built by Cys113, Thr154, Thr202, and His235. Cys113 functions as the Acyl-thioester intermediate in the catalytic mechanism. His235 (proton donor/acceptor) is an active-site residue. Arg240 is a binding site for CoA. Arg244, Asn267, and Ser297 together coordinate (3S)-3-hydroxy-3-methylglutaryl-CoA.

This sequence belongs to the thiolase-like superfamily. Archaeal HMG-CoA synthase family. Interacts with acetoacetyl-CoA thiolase that catalyzes the precedent step in the pathway and with a DUF35 protein. The acetoacetyl-CoA thiolase/HMG-CoA synthase complex channels the intermediate via a fused CoA-binding site, which allows for efficient coupling of the endergonic thiolase reaction with the exergonic HMGCS reaction.

It catalyses the reaction acetoacetyl-CoA + acetyl-CoA + H2O = (3S)-3-hydroxy-3-methylglutaryl-CoA + CoA + H(+). Its pathway is metabolic intermediate biosynthesis; (R)-mevalonate biosynthesis; (R)-mevalonate from acetyl-CoA: step 2/3. Its function is as follows. Catalyzes the condensation of acetyl-CoA with acetoacetyl-CoA to form 3-hydroxy-3-methylglutaryl-CoA (HMG-CoA). Functions in the mevalonate (MVA) pathway leading to isopentenyl diphosphate (IPP), a key precursor for the biosynthesis of isoprenoid compounds that are building blocks of archaeal membrane lipids. In Caldivirga maquilingensis (strain ATCC 700844 / DSM 13496 / JCM 10307 / IC-167), this protein is Hydroxymethylglutaryl-CoA synthase.